The sequence spans 185 residues: TATA-box-binding protein 2 (185 aa).

2 repeat units span residues 7 to 84 (IENI…ANEL) and 100 to 178 (VQNV…KTQL).

The protein belongs to the TBP family.

General factor that plays a role in the activation of archaeal genes transcribed by RNA polymerase. Binds specifically to the TATA box promoter element which lies close to the position of transcription initiation. This chain is TATA-box-binding protein 2, found in Methanosarcina acetivorans (strain ATCC 35395 / DSM 2834 / JCM 12185 / C2A).